The sequence spans 129 residues: MTALMVRIRQEHRSIAEEVTQLFRETHEFLSATTAHRQEQAKQQAQQLHQFHQNLEQTTHEFLTETTTQRVAQAEAQANFLHKFHQNLEQTTQEFLAETAKNRTEQAKAQSQYLQQFRKDLFASIFGTF.

3 consecutive repeats follow at residues Val19–Phe51, His52–Phe84, and His85–Phe117. A 3 X 33 AA tandem repeats region spans residues Val19–Phe117.

This sequence belongs to the gas vesicle GvpC family.

It is found in the gas vesicle. Confers stability, involved in shaping gas vesicles, hollow, gas filled proteinaceous nanostructures. During planktonic growth they allow positioning of the organism at a favorable depth for light or nutrient acquisition. In terms of biological role, cluster expression in E.coli (gvpA1-gvpA2-gvpC-gvpN-gvpJ-gvpK-gvpF-gvpG-gvpV-gvpW) allows cells to float and produces irregularly shaped gas vesicles. The sequence is that of Gas vesicle protein C from Nostoc sp. (strain PCC 7120 / SAG 25.82 / UTEX 2576).